The chain runs to 795 residues: MSKRHRLDLGEDYPSGKKRAGTDGKDRERDRDREDRSKDRDRERDRGDREREREKEKEKELRASTNAMLISAGLPPLKASHSAHSTHSAHSTHSTHSAHSTHTGHTGHTSLPQCINPFTNLPHTPRYYDILKKRLQLPVWEYKDRFTDILVRHQSFVLVGETGSGKTTQIPQWCVEYMRSLPGPKRGVACTQPRRVAAMSVAQRVADEMDVMLGQEVGYSIRFEDCSSAKTILKYMTDGMLLREAMNDPLLERYGVIILDEAHERTLATDILMGVLKEVVRQRSDLKVIVMSATLDAGKFQIYFDNCPLLTIPGRTHPVEIFYTPEPERDYLEAAIRTVIQIHMCEEEEGDLLLFLTGQEEIDEACKRIKREVDDLGPEVGDIKIIPLYSTLPPQQQQRIFEPPPPKKQNGAIGRKVVVSTNIAETSLTIDGVVFVIDPGFAKQKVYNPRIRVESLLVTAISKASAQQRAGRAGRTRPGKCFRLYTEKAYKTEMQDNTYPEILRSNLGSVVLQLKKLGIDDLVHFDFMDPPAPETLMRALELLNYLAALNDDGDLTELGSMMAEFPLDPQLAKMVIASCDYNCSNEVLSITAMLSVPQCFVRPTEAKKAADEAKMRFAHIDGDHLTLLNVYHAFKQNHESVQWCYDNFINYRSLMSADNVRQQLSRIMDRFNLPRRSTDFTSRDYYINIRKALVTGYFMQVAHLERTGHYLTVKDNQVVQLHPSTVLDHKPEWVLYNEFVLTTKNYIRTCTDIKPEWLVKIAPQYYDMSNFPQCEAKRQLDRIIAKLQSKEYSQY.

The segment at 1–111 is disordered; it reads MSKRHRLDLG…HTGHTGHTSL (111 aa). S15 carries the phosphoserine modification. Over residues 20–62 the composition is skewed to basic and acidic residues; sequence AGTDGKDRERDRDREDRSKDRDRERDRGDREREREKEKEKELR. Low complexity predominate over residues 79–110; the sequence is ASHSAHSTHSAHSTHSTHSAHSTHTGHTGHTS. The 167-residue stretch at 147 to 313 folds into the Helicase ATP-binding domain; that stretch reads TDILVRHQSF…FDNCPLLTIP (167 aa). 160-167 serves as a coordination point for ATP; the sequence is GETGSGKT. The DEAH box signature appears at 260–263; sequence DEAH. Positions 338–518 constitute a Helicase C-terminal domain; sequence TVIQIHMCEE…SVVLQLKKLG (181 aa). At K488 the chain carries N6-acetyllysine. K786 participates in a covalent cross-link: Glycyl lysine isopeptide (Lys-Gly) (interchain with G-Cter in SUMO2).

It belongs to the DEAD box helicase family. DEAH subfamily. DDX15/PRP43 sub-subfamily. As to quaternary structure, component of the U11/U12 snRNPs that are part of the U12-type spliceosome. Identified in the Intron Large spliceosome complex (IL, also named intron lariat spliceosome), a post-mRNA release spliceosomal complex containing the excised intron, U2, U5 and U6 snRNPs, and splicing factors; the association may be transient. The IL complex exists in two distinct conformations, one with the DHX15 (ILS2) and one without (ILS1). Interacts with TFIP11 (via G-patch domain); indicative for a recruitment to the IL complex. Interacts with SSB/La. Interacts with GPATCH2 (via G-patch domain); promoting the RNA helicase activity. Interacts with NKRF (via G-patch domain); promoting the RNA helicase activity. Interacts with NLRP6. As to expression, ubiquitous.

Its subcellular location is the nucleus. It is found in the nucleolus. The catalysed reaction is ATP + H2O = ADP + phosphate + H(+). Its activity is regulated as follows. ATPase activity is enhanced upon binding to G-patch domain-containing proteins. G-patch domain-containing proteins act like a brace that tethers mobile sections of DHX15 together, stabilizing a functional conformation with high RNA affinity, thereby promoting the ATPase activity. Functionally, RNA helicase involved in mRNA processing and antiviral innate immunity. Pre-mRNA processing factor involved in disassembly of spliceosomes after the release of mature mRNA. In cooperation with TFIP11 seem to be involved in the transition of the U2, U5 and U6 snRNP-containing IL complex to the snRNP-free IS complex leading to efficient debranching and turnover of excised introns. Plays a key role in antiviral innate immunity by promoting both MAVS-dependent signaling and NLRP6 inflammasome. Acts as an RNA virus sensor: recognizes and binds viral double stranded RNA (dsRNA) and activates the MAVS-dependent signaling to produce interferon-beta and interferon lambda-3 (IFNL3). Involved in intestinal antiviral innate immunity together with NLRP6: recognizes and binds viral dsRNA and promotes activation of the NLRP6 inflammasome in intestinal epithelial cells to restrict infection by enteric viruses. The NLRP6 inflammasome acts by promoting maturation and secretion of IL18 in the extracellular milieu. Also involved in antibacterial innate immunity by promoting Wnt-induced antimicrobial protein expression in Paneth cells. The polypeptide is ATP-dependent RNA helicase DHX15 (Mus musculus (Mouse)).